The following is a 145-amino-acid chain: Transmembrane protein 170A (145 aa).

Residues 1–50 (MIEALIVGEMQDVQIGFVKQILSLNLVPRSNNTTCGNNTSLCDFSEMWYG) lie on the Lumenal side of the membrane. Residues Asn-31 and Asn-37 are each glycosylated (N-linked (GlcNAc...) asparagine). The chain crosses the membrane as a helical span at residues 51–71 (VFLWAVVSSLIFHLPAALLAL). The Cytoplasmic segment spans residues 72–81 (ATLRRHKVAR). A helical transmembrane segment spans residues 82-102 (FFPLGILLMGIIGPLFGGVLT). The Lumenal portion of the chain corresponds to 103 to 117 (SAAIAGVYKAAGKSM). Residues 118–138 (FSLEALVFGVGQSLFIFIISF) form a helical membrane-spanning segment. The Cytoplasmic portion of the chain corresponds to 139-145 (LRILATL).

The protein belongs to the TMEM170 family.

It is found in the endoplasmic reticulum membrane. Its subcellular location is the nucleus envelope. May regulate membrane morphogenesis in the endoplasmic reticulum (ER) by promoting ER sheet formation at the expense of ER tubules. This Danio rerio (Zebrafish) protein is Transmembrane protein 170A (tmem170a).